Consider the following 123-residue polypeptide: Small ribosomal subunit protein uS12 (123 aa).

A 3-methylthioaspartic acid modification is found at D89.

Belongs to the universal ribosomal protein uS12 family. As to quaternary structure, part of the 30S ribosomal subunit. Contacts proteins S8 and S17. May interact with IF1 in the 30S initiation complex.

Functionally, with S4 and S5 plays an important role in translational accuracy. Its function is as follows. Interacts with and stabilizes bases of the 16S rRNA that are involved in tRNA selection in the A site and with the mRNA backbone. Located at the interface of the 30S and 50S subunits, it traverses the body of the 30S subunit contacting proteins on the other side and probably holding the rRNA structure together. The combined cluster of proteins S8, S12 and S17 appears to hold together the shoulder and platform of the 30S subunit. The polypeptide is Small ribosomal subunit protein uS12 (Pelagibacter ubique (strain HTCC1062)).